The sequence spans 371 residues: GDP-perosamine synthase (371 aa).

Lys-186 carries the post-translational modification N6-(pyridoxal phosphate)lysine.

Belongs to the DegT/DnrJ/EryC1 family. In terms of assembly, homodimer. Pyridoxal 5'-phosphate is required as a cofactor.

The catalysed reaction is GDP-alpha-D-perosamine + 2-oxoglutarate = GDP-4-dehydro-alpha-D-rhamnose + L-glutamate. It functions in the pathway bacterial outer membrane biogenesis; LPS O-antigen biosynthesis. Catalyzes the synthesis of GDP-perosamine from GDP-4-keto-6-deoxy-D-mannose and L-glutamate. Can use only L-glutamate as amino donor. In vitro, can also use GDP-4-keto-3,6-dideoxymannose to produce GDP-3-deoxyperosamine. Involved in the formation of S-LPS, which is required for attachment of the protein S-layer to the outer membrane surface. The protein is GDP-perosamine synthase of Caulobacter vibrioides (strain ATCC 19089 / CIP 103742 / CB 15) (Caulobacter crescentus).